The primary structure comprises 205 residues: Small ribosomal subunit protein uS4 (205 aa).

Basic residues predominate over residues 1 to 12; that stretch reads MSKRVQAKHKLD. Positions 1-49 are disordered; the sequence is MSKRVQAKHKLDRRMGQNIWGRPKSPVNRREYGPGQHGQRRKGKMSDFG. In terms of domain architecture, S4 RNA-binding spans 94 to 155; that stretch reads RRLDAVVYRS…ASRQLEIVVV (62 aa).

This sequence belongs to the universal ribosomal protein uS4 family. As to quaternary structure, part of the 30S ribosomal subunit. Contacts protein S5. The interaction surface between S4 and S5 is involved in control of translational fidelity.

Its function is as follows. One of the primary rRNA binding proteins, it binds directly to 16S rRNA where it nucleates assembly of the body of the 30S subunit. In terms of biological role, with S5 and S12 plays an important role in translational accuracy. In Methylorubrum extorquens (strain CM4 / NCIMB 13688) (Methylobacterium extorquens), this protein is Small ribosomal subunit protein uS4.